Here is a 1168-residue protein sequence, read N- to C-terminus: DNA-directed RNA polymerase subunit beta (1168 aa).

The protein belongs to the RNA polymerase beta chain family. As to quaternary structure, the RNAP catalytic core consists of 2 alpha, 1 beta, 1 beta' and 1 omega subunit. When a sigma factor is associated with the core the holoenzyme is formed, which can initiate transcription.

It catalyses the reaction RNA(n) + a ribonucleoside 5'-triphosphate = RNA(n+1) + diphosphate. DNA-dependent RNA polymerase catalyzes the transcription of DNA into RNA using the four ribonucleoside triphosphates as substrates. The polypeptide is DNA-directed RNA polymerase subunit beta (Rhodococcus jostii (strain RHA1)).